A 311-amino-acid polypeptide reads, in one-letter code: tRNA dimethylallyltransferase (311 aa).

9–16 is a binding site for ATP; that stretch reads GPTAVGKT. 11–16 serves as a coordination point for substrate; the sequence is TAVGKT. Residues 34 to 37 form an interaction with substrate tRNA region; that stretch reads DSMQ.

The protein belongs to the IPP transferase family. Monomer. The cofactor is Mg(2+).

It carries out the reaction adenosine(37) in tRNA + dimethylallyl diphosphate = N(6)-dimethylallyladenosine(37) in tRNA + diphosphate. Catalyzes the transfer of a dimethylallyl group onto the adenine at position 37 in tRNAs that read codons beginning with uridine, leading to the formation of N6-(dimethylallyl)adenosine (i(6)A). The protein is tRNA dimethylallyltransferase of Clostridium botulinum (strain Hall / ATCC 3502 / NCTC 13319 / Type A).